The sequence spans 257 residues: 5-oxoprolinase subunit A (257 aa).

This sequence belongs to the LamB/PxpA family. As to quaternary structure, forms a complex composed of PxpA, PxpB and PxpC.

The enzyme catalyses 5-oxo-L-proline + ATP + 2 H2O = L-glutamate + ADP + phosphate + H(+). Its function is as follows. Catalyzes the cleavage of 5-oxoproline to form L-glutamate coupled to the hydrolysis of ATP to ADP and inorganic phosphate. The chain is 5-oxoprolinase subunit A from Fusobacterium nucleatum subsp. nucleatum (strain ATCC 25586 / DSM 15643 / BCRC 10681 / CIP 101130 / JCM 8532 / KCTC 2640 / LMG 13131 / VPI 4355).